The following is a 389-amino-acid chain: tRNA pseudouridine synthase Pus10 (389 aa).

Aspartate 213 functions as the Nucleophile in the catalytic mechanism. The substrate site is built by tyrosine 278 and tyrosine 350.

The protein belongs to the pseudouridine synthase Pus10 family.

The enzyme catalyses uridine(54) in tRNA = pseudouridine(54) in tRNA. It carries out the reaction uridine(55) in tRNA = pseudouridine(55) in tRNA. Functionally, responsible for synthesis of pseudouridine from uracil-54 and uracil-55 in the psi GC loop of transfer RNAs. This chain is tRNA pseudouridine synthase Pus10, found in Thermoplasma acidophilum (strain ATCC 25905 / DSM 1728 / JCM 9062 / NBRC 15155 / AMRC-C165).